The chain runs to 548 residues: Eukaryotic translation initiation factor 3 subunit D (548 aa).

Residue lysine 53 is modified to N6-acetyllysine. Residue serine 161 is modified to Phosphoserine. The RNA gate stretch occupies residues 285–299 (DFDLPTVSETANEPP). Disordered regions lie at residues 288 to 309 (LPTV…FNSP) and 523 to 548 (PDGT…EEET). A compositionally biased stretch (polar residues) spans 291–309 (VSETANEPPQDEGNSFNSP). Serine 528 and serine 529 each carry phosphoserine. Residues 529–548 (SDEDEEEEEEEEEEEEEEET) are compositionally biased toward acidic residues.

This sequence belongs to the eIF-3 subunit D family. As to quaternary structure, component of the eukaryotic translation initiation factor 3 (eIF-3) complex, which is composed of 13 subunits: EIF3A, EIF3B, EIF3C, EIF3D, EIF3E, EIF3F, EIF3G, EIF3H, EIF3I, EIF3J, EIF3K, EIF3L and EIF3M. The eIF-3 complex appears to include 3 stable modules: module A is composed of EIF3A, EIF3B, EIF3G and EIF3I; module B is composed of EIF3F, EIF3H, and EIF3M; and module C is composed of EIF3C, EIF3D, EIF3E, EIF3K and EIF3L. EIF3C of module C binds EIF3B of module A and EIF3H of module B, thereby linking the three modules. EIF3J is a labile subunit that binds to the eIF-3 complex via EIF3B. The eIF-3 complex interacts with RPS6KB1 under conditions of nutrient depletion. Mitogenic stimulation leads to binding and activation of a complex composed of MTOR and RPTOR, leading to phosphorylation and release of RPS6KB1 and binding of EIF4B to eIF-3.

It is found in the cytoplasm. Its function is as follows. mRNA cap-binding component of the eukaryotic translation initiation factor 3 (eIF-3) complex, a complex required for several steps in the initiation of protein synthesis of a specialized repertoire of mRNAs. The eIF-3 complex associates with the 40S ribosome and facilitates the recruitment of eIF-1, eIF-1A, eIF-2:GTP:methionyl-tRNAi and eIF-5 to form the 43S pre-initiation complex (43S PIC). The eIF-3 complex stimulates mRNA recruitment to the 43S PIC and scanning of the mRNA for AUG recognition. The eIF-3 complex is also required for disassembly and recycling of post-termination ribosomal complexes and subsequently prevents premature joining of the 40S and 60S ribosomal subunits prior to initiation. The eIF-3 complex specifically targets and initiates translation of a subset of mRNAs involved in cell proliferation, including cell cycling, differentiation and apoptosis, and uses different modes of RNA stem-loop binding to exert either translational activation or repression. In the eIF-3 complex, EIF3D specifically recognizes and binds the 7-methylguanosine cap of a subset of mRNAs. The protein is Eukaryotic translation initiation factor 3 subunit D of Pongo abelii (Sumatran orangutan).